The primary structure comprises 444 residues: Phosphoglucosamine mutase (444 aa).

S104 acts as the Phosphoserine intermediate in catalysis. Positions 104, 243, 245, and 247 each coordinate Mg(2+). S104 carries the post-translational modification Phosphoserine.

It belongs to the phosphohexose mutase family. Mg(2+) serves as cofactor. Post-translationally, activated by phosphorylation.

It carries out the reaction alpha-D-glucosamine 1-phosphate = D-glucosamine 6-phosphate. Catalyzes the conversion of glucosamine-6-phosphate to glucosamine-1-phosphate. This Neisseria gonorrhoeae (strain ATCC 700825 / FA 1090) protein is Phosphoglucosamine mutase.